We begin with the raw amino-acid sequence, 154 residues long: Golgi-associated plant pathogenesis-related protein 1 (154 aa).

Residues 1 to 21 (MGKSASKQFHNEVLKAHNEYR) form a disordered region. A lipid anchor (N-myristoyl glycine) is attached at glycine 2. Residues 9 to 21 (FHNEVLKAHNEYR) are compositionally biased toward basic and acidic residues. The SCP domain occupies 14-132 (LKAHNEYRQK…SDGSSFVVAR (119 aa)). Residues 30 to 53 (KLCKNLNREAQQYSEALASTRILK) adopt a coiled-coil conformation. The segment at 91 to 98 (NFQQPGFT) is interaction with CAV1.

Belongs to the CRISP family. Homodimer. Interacts with CAV1. Highest expression in lung and peripheral leukocytes, and minor expression in liver and kidney.

It is found in the golgi apparatus membrane. The polypeptide is Golgi-associated plant pathogenesis-related protein 1 (GLIPR2) (Homo sapiens (Human)).